The chain runs to 215 residues: Venom allergen 5.02 (215 aa).

An N-terminal signal peptide occupies residues 1-10 (PIINLSFGEA). Intrachain disulfides connect cysteine 14–cysteine 26, cysteine 18–cysteine 111, cysteine 36–cysteine 104, and cysteine 181–cysteine 198. An SCP domain is found at 55 to 200 (VNRHNQFRQK…WHTHYLVCNY (146 aa)).

Belongs to the CRISP family. Venom allergen 5-like subfamily. In terms of tissue distribution, expressed by the venom gland.

The protein resides in the secreted. This Dolichovespula maculata (Bald-faced hornet) protein is Venom allergen 5.02.